The chain runs to 194 residues: Small ribosomal subunit protein uS7 (194 aa).

This sequence belongs to the universal ribosomal protein uS7 family. In terms of assembly, part of the 30S ribosomal subunit.

One of the primary rRNA binding proteins, it binds directly to 16S rRNA where it nucleates assembly of the head domain of the 30S subunit. Is located at the subunit interface close to the decoding center. This chain is Small ribosomal subunit protein uS7, found in Methanococcus vannielii (strain ATCC 35089 / DSM 1224 / JCM 13029 / OCM 148 / SB).